A 173-amino-acid polypeptide reads, in one-letter code: Large ribosomal subunit protein uL10 (173 aa).

Belongs to the universal ribosomal protein uL10 family. In terms of assembly, part of the ribosomal stalk of the 50S ribosomal subunit. The N-terminus interacts with L11 and the large rRNA to form the base of the stalk. The C-terminus forms an elongated spine to which L12 dimers bind in a sequential fashion forming a multimeric L10(L12)X complex.

Functionally, forms part of the ribosomal stalk, playing a central role in the interaction of the ribosome with GTP-bound translation factors. The chain is Large ribosomal subunit protein uL10 from Christiangramia forsetii (strain DSM 17595 / CGMCC 1.15422 / KT0803) (Gramella forsetii).